A 585-amino-acid chain; its full sequence is Lipoprotein LpqB (585 aa).

The signal sequence occupies residues 1–17 (MGRKLLGLLMLAVLLAG). Cys-18 carries N-palmitoyl cysteine lipidation. Residue Cys-18 is the site of S-diacylglycerol cysteine attachment. Disordered stretches follow at residues 24–48 (SSAP…TPGM) and 560–585 (PSAD…VLPG).

This sequence belongs to the LpqB lipoprotein family.

It localises to the cell membrane. This chain is Lipoprotein LpqB, found in Mycolicibacterium paratuberculosis (strain ATCC BAA-968 / K-10) (Mycobacterium paratuberculosis).